The chain runs to 152 residues: Transcriptional regulator MraZ (152 aa).

SpoVT-AbrB domains follow at residues 5–52 and 81–124; these read ASAI…PIHE and AHEV…DEQA.

It belongs to the MraZ family. Forms oligomers.

Its subcellular location is the cytoplasm. It is found in the nucleoid. The sequence is that of Transcriptional regulator MraZ from Shewanella putrefaciens (strain CN-32 / ATCC BAA-453).